The following is a 331-amino-acid chain: MARMYYDADAQLELLKDKTIAIIGYGSQGHAHALNLRDSGLNVVVGLYAGSRSAERARAEGLAVHPVAEAAKMADWIMILLPDEVQRVVYEQEIAPHLQPGNVLSFAHGFNIHFGQIVPPAHVDVVMVAPKGPGHLVRRTYAQGEGVPCLFAVYQDASGQARDLAMAYAKGIGGTRAGILETTFREETETDLFGEQVVLCGGLSALIKAGFETLVQAGYQPELAYFECLHEVKLIVDLIVEGGLAKMRDSISNTAEYGDLTRGPRIITEETRAEMRKILHEIQTGQFAREFVLENMAGKPGFTAMRRREAEHPIEQVGQELRSMFSWLKRA.

One can recognise a KARI N-terminal Rossmann domain in the interval 2 to 182; that stretch reads ARMYYDADAQ…GGTRAGILET (181 aa). NADP(+)-binding positions include 25–28, Ser51, Ser53, and 83–86; these read YGSQ and DEVQ. Residue His108 is part of the active site. Gly134 serves as a coordination point for NADP(+). The KARI C-terminal knotted domain maps to 183 to 328; the sequence is TFREETETDL…QELRSMFSWL (146 aa). Residues Asp191, Glu195, Glu227, and Glu231 each contribute to the Mg(2+) site. Residue Ser252 participates in substrate binding.

Belongs to the ketol-acid reductoisomerase family. The cofactor is Mg(2+).

It carries out the reaction (2R)-2,3-dihydroxy-3-methylbutanoate + NADP(+) = (2S)-2-acetolactate + NADPH + H(+). The catalysed reaction is (2R,3R)-2,3-dihydroxy-3-methylpentanoate + NADP(+) = (S)-2-ethyl-2-hydroxy-3-oxobutanoate + NADPH + H(+). Its pathway is amino-acid biosynthesis; L-isoleucine biosynthesis; L-isoleucine from 2-oxobutanoate: step 2/4. It functions in the pathway amino-acid biosynthesis; L-valine biosynthesis; L-valine from pyruvate: step 2/4. Its function is as follows. Involved in the biosynthesis of branched-chain amino acids (BCAA). Catalyzes an alkyl-migration followed by a ketol-acid reduction of (S)-2-acetolactate (S2AL) to yield (R)-2,3-dihydroxy-isovalerate. In the isomerase reaction, S2AL is rearranged via a Mg-dependent methyl migration to produce 3-hydroxy-3-methyl-2-ketobutyrate (HMKB). In the reductase reaction, this 2-ketoacid undergoes a metal-dependent reduction by NADPH to yield (R)-2,3-dihydroxy-isovalerate. This chain is Ketol-acid reductoisomerase (NADP(+)), found in Thermosynechococcus vestitus (strain NIES-2133 / IAM M-273 / BP-1).